We begin with the raw amino-acid sequence, 337 residues long: Aspartate carbamoyltransferase catalytic subunit (337 aa).

Positions 57 and 58 each coordinate carbamoyl phosphate. Lys-86 serves as a coordination point for L-aspartate. Residues Arg-107, His-135, and Gln-138 each contribute to the carbamoyl phosphate site. L-aspartate is bound by residues Arg-172 and Arg-234. Carbamoyl phosphate-binding residues include Leu-274 and Pro-275.

This sequence belongs to the aspartate/ornithine carbamoyltransferase superfamily. ATCase family. In terms of assembly, heterododecamer (2C3:3R2) of six catalytic PyrB chains organized as two trimers (C3), and six regulatory PyrI chains organized as three dimers (R2).

The catalysed reaction is carbamoyl phosphate + L-aspartate = N-carbamoyl-L-aspartate + phosphate + H(+). The protein operates within pyrimidine metabolism; UMP biosynthesis via de novo pathway; (S)-dihydroorotate from bicarbonate: step 2/3. In terms of biological role, catalyzes the condensation of carbamoyl phosphate and aspartate to form carbamoyl aspartate and inorganic phosphate, the committed step in the de novo pyrimidine nucleotide biosynthesis pathway. This chain is Aspartate carbamoyltransferase catalytic subunit, found in Saccharophagus degradans (strain 2-40 / ATCC 43961 / DSM 17024).